Reading from the N-terminus, the 232-residue chain is 5'-methylthioadenosine/S-adenosylhomocysteine nucleosidase (232 aa).

E14 acts as the Proton acceptor in catalysis. Substrate-binding positions include G80, V154, and 175 to 176; that span reads ME. D199 functions as the Proton donor in the catalytic mechanism.

Belongs to the PNP/UDP phosphorylase family. MtnN subfamily.

The catalysed reaction is S-adenosyl-L-homocysteine + H2O = S-(5-deoxy-D-ribos-5-yl)-L-homocysteine + adenine. It catalyses the reaction S-methyl-5'-thioadenosine + H2O = 5-(methylsulfanyl)-D-ribose + adenine. It carries out the reaction 5'-deoxyadenosine + H2O = 5-deoxy-D-ribose + adenine. The protein operates within amino-acid biosynthesis; L-methionine biosynthesis via salvage pathway; S-methyl-5-thio-alpha-D-ribose 1-phosphate from S-methyl-5'-thioadenosine (hydrolase route): step 1/2. In terms of biological role, catalyzes the irreversible cleavage of the glycosidic bond in both 5'-methylthioadenosine (MTA) and S-adenosylhomocysteine (SAH/AdoHcy) to adenine and the corresponding thioribose, 5'-methylthioribose and S-ribosylhomocysteine, respectively. Also cleaves 5'-deoxyadenosine, a toxic by-product of radical S-adenosylmethionine (SAM) enzymes, into 5-deoxyribose and adenine. The chain is 5'-methylthioadenosine/S-adenosylhomocysteine nucleosidase from Actinobacillus pleuropneumoniae serotype 5b (strain L20).